The chain runs to 530 residues: Metal transporter Nramp5 (530 aa).

The span at 1 to 10 (MTGSTVSRQE) shows a compositional bias: polar residues. Residues 1–53 (MTGSTVSRQENSPKRPNDSNGEFKRLLVPETSQPEEDELHESPPENQILNVEE) form a disordered region. Basic and acidic residues predominate over residues 11–27 (NSPKRPNDSNGEFKRLL). 12 consecutive transmembrane segments (helical) span residues 65-85 (FSWA…IAFL), 98-118 (AVAG…GLLM), 147-167 (ILLW…EVIG), 179-199 (FLPI…ISYL), 207-227 (LEGL…WMFN), 253-273 (AVGV…SALV), 299-319 (AALF…AKGF), 341-361 (YGGG…AAGQ), 387-407 (LSAF…AIMF), 429-449 (IPFA…MGVF), 458-478 (LAWT…LDFF), and 485-505 (FLVG…IIYL).

This sequence belongs to the NRAMP (TC 2.A.55) family.

It is found in the membrane. Seems to be involved in iron uptake. The chain is Metal transporter Nramp5 (NRAMP5) from Arabidopsis thaliana (Mouse-ear cress).